We begin with the raw amino-acid sequence, 215 residues long: Urease accessory protein UreG (215 aa).

The interval 1 to 21 (MNAPASSPARRTKKLPPLRVG) is disordered. A GTP-binding site is contributed by 24–31 (GPVGSGKT).

This sequence belongs to the SIMIBI class G3E GTPase family. UreG subfamily. Homodimer. UreD, UreF and UreG form a complex that acts as a GTP-hydrolysis-dependent molecular chaperone, activating the urease apoprotein by helping to assemble the nickel containing metallocenter of UreC. The UreE protein probably delivers the nickel.

The protein localises to the cytoplasm. In terms of biological role, facilitates the functional incorporation of the urease nickel metallocenter. This process requires GTP hydrolysis, probably effectuated by UreG. This chain is Urease accessory protein UreG, found in Burkholderia vietnamiensis (strain G4 / LMG 22486) (Burkholderia cepacia (strain R1808)).